The following is a 665-amino-acid chain: Pentatricopeptide repeat-containing protein At1g04840 (665 aa).

11 PPR repeats span residues 90–124 (NPFV…GVKP), 125–155 (DRLT…TLKN), 160–190 (DSFV…SPDR), 195–229 (SILI…NSGS), 230–256 (WSTL…MPEK), 257–291 (NVVS…GLKP), 292–326 (NEYT…GIKL), 327–357 (DRAI…MNHK), 358–392 (DILS…GEKP), 393–423 (DEVV…MRLD), and 429–459 (TLKH…MPIN). The segment at 464–539 (TWAALYRACK…SLGWSYIELD (76 aa)) is type E motif. Residues 540-570 (GQLNKFSAGDYSHKLTQEIGLKLDEIISLAI) form a type E(+) motif region. A type DYW motif region spans residues 571–665 (QKGYNPGADW…DGRCSCGDYW (95 aa)).

This sequence belongs to the PPR family. PCMP-H subfamily.

The protein is Pentatricopeptide repeat-containing protein At1g04840 (PCMP-H64) of Arabidopsis thaliana (Mouse-ear cress).